We begin with the raw amino-acid sequence, 297 residues long: uncharacterized protein (297 aa).

The next 5 membrane-spanning stretches (helical) occupy residues Y114–G136, L150–V170, M197–L217, A227–I247, and F269–L289.

This sequence belongs to the ThrE exporter (TC 2.A.79) family.

The protein resides in the cell inner membrane. This is an uncharacterized protein from Haemophilus influenzae (strain ATCC 51907 / DSM 11121 / KW20 / Rd).